A 419-amino-acid chain; its full sequence is UPF0229 protein Tbd_1233 (419 aa).

The interval 85–108 is disordered; that stretch reads GDRIDRPAGEGGGGSGGSPDGEGM. Gly residues predominate over residues 93–104; it reads GEGGGGSGGSPD.

Belongs to the UPF0229 family.

In Thiobacillus denitrificans (strain ATCC 25259 / T1), this protein is UPF0229 protein Tbd_1233.